Consider the following 480-residue polypeptide: Glycogen synthase (480 aa).

Lysine 15 lines the ADP-alpha-D-glucose pocket.

This sequence belongs to the glycosyltransferase 1 family. Bacterial/plant glycogen synthase subfamily.

It carries out the reaction [(1-&gt;4)-alpha-D-glucosyl](n) + ADP-alpha-D-glucose = [(1-&gt;4)-alpha-D-glucosyl](n+1) + ADP + H(+). The protein operates within glycan biosynthesis; glycogen biosynthesis. Functionally, synthesizes alpha-1,4-glucan chains using ADP-glucose. This is Glycogen synthase from Pasteurella multocida (strain Pm70).